The primary structure comprises 513 residues: RNA-splicing ligase RtcB homolog (513 aa).

Positions 127, 130, 235, 267, and 361 each coordinate Mn(2+). Residue 234 to 238 (NHYAE) coordinates GMP. Residues 361–362 (HN), 410–413 (GGTM), Ser-417, 436–439 (HGAG), and Lys-512 each bind GMP. His-436 functions as the GMP-histidine intermediate in the catalytic mechanism.

Belongs to the RtcB family. In terms of assembly, catalytic component of the tRNA-splicing ligase complex. The cofactor is Mn(2+).

The enzyme catalyses a 3'-end 3'-phospho-ribonucleotide-RNA + a 5'-end dephospho-ribonucleoside-RNA + GTP = a ribonucleotidyl-ribonucleotide-RNA + GMP + diphosphate. It carries out the reaction a 3'-end 2',3'-cyclophospho-ribonucleotide-RNA + a 5'-end dephospho-ribonucleoside-RNA + GTP + H2O = a ribonucleotidyl-ribonucleotide-RNA + GMP + diphosphate + H(+). In terms of biological role, catalytic subunit of the tRNA-splicing ligase complex that acts by directly joining spliced tRNA halves to mature-sized tRNAs by incorporating the precursor-derived splice junction phosphate into the mature tRNA as a canonical 3',5'-phosphodiester. May act as an RNA ligase with broad substrate specificity, and may function toward other RNAs. The polypeptide is RNA-splicing ligase RtcB homolog (Micromonas commoda (strain RCC299 / NOUM17 / CCMP2709) (Picoplanktonic green alga)).